The sequence spans 539 residues: Neutral amino acid transporter B(0) (539 aa).

Position 1 is an N-acetylmethionine (Met1). Residues 1–52 (MVADPPKGDPKGYAAAEPTANGVSMLVPIEDVGSLKGGRCGSGDQVRRCLRA) are Cytoplasmic-facing. A helical membrane pass occupies residues 53-82 (NLLVLLTVVAVVAGVALGLGVSGAGGAFAL). At 83–95 (GPARLEAFSFPGE) the chain is on the extracellular side. Residues 96-117 (LLLRLLKMIILPLVVCSLIGGA) traverse the membrane as a helical segment. The Cytoplasmic portion of the chain corresponds to 118–131 (ASLDPSALGRLGAW). Residues 132 to 154 (ALLFFLVTTLLASALGVGLALAL) form a helical membrane-spanning segment. The Extracellular segment spans residues 155–223 (QPGAAFAAIN…GTLVKVPTGG (69 aa)). N-linked (GlcNAc...) asparagine glycosylation is found at Asn164 and Asn213. The chain crosses the membrane as a helical span at residues 224-247 (EVEGMNILGLVVFAIIFGVALRKL). Topologically, residues 248–256 (GPEGELLIR) are cytoplasmic. The helical transmembrane segment at 257–284 (FFNSFNDATMVLVSWIMWYAPVGILFLV) threads the bilayer. Over 285–305 (AGKIVEMENVGLLFASLGKYI) the chain is Extracellular. The helical transmembrane segment at 306–327 (LCCLLGHAIHGLLTLPLIYFLF) threads the bilayer. Residues 328-332 (ARKNP) lie on the Cytoplasmic side of the membrane. Positions 333 to 363 (YRFLWGIMTPLATAFGTSSSSATLPLMMKCV) form an intramembrane region, discontinuously helical. The Cytoplasmic segment spans residues 364 to 372 (EEKNGVARH). The helical transmembrane segment at 373-399 (ISRFILPIGATVNMDGAALFQCVAAVF) threads the bilayer. Residues Gly381, Thr383, and Asn385 each coordinate Na(+). Topologically, residues 400–412 (IAQLNHRSLDFVK) are extracellular. The segment at residues 413–446 (IITILVTATASSVGAAGIPSGGVLTLAIILEAVN) is an intramembrane region (discontinuously helical). Residues 447 to 459 (LPVHDISLILAVD) are Extracellular-facing. The helical transmembrane segment at 460-481 (WLVDRSCTVLNVEGDAFGAGLL) threads the bilayer. Asn470 and Asp474 together coordinate Na(+). Residues 482–539 (QSYLDRTENCNSVPELIQVKSEMPLAALPVPGEEGNPLLKGCPGPAGDADTCEKESVM) are Cytoplasmic-facing. Phosphoserine is present on residues Ser493, Ser502, and Ser537. Residues 518-539 (PLLKGCPGPAGDADTCEKESVM) form a disordered region.

It belongs to the dicarboxylate/amino acid:cation symporter (DAACS) (TC 2.A.23) family. SLC1A5 subfamily. Homotrimer.

It is found in the cell membrane. It localises to the melanosome. The catalysed reaction is L-glutamine(out) + L-serine(in) + Na(+)(out) = L-glutamine(in) + L-serine(out) + Na(+)(in). It catalyses the reaction L-glutamine(in) + L-serine(out) + Na(+)(out) = L-glutamine(out) + L-serine(in) + Na(+)(in). The enzyme catalyses L-threonine(in) + L-glutamine(out) + Na(+)(out) = L-threonine(out) + L-glutamine(in) + Na(+)(in). It carries out the reaction L-threonine(out) + L-glutamine(in) + Na(+)(out) = L-threonine(in) + L-glutamine(out) + Na(+)(in). The catalysed reaction is L-asparagine(in) + L-glutamine(out) + Na(+)(out) = L-asparagine(out) + L-glutamine(in) + Na(+)(in). It catalyses the reaction L-asparagine(out) + L-glutamine(in) + Na(+)(out) = L-asparagine(in) + L-glutamine(out) + Na(+)(in). The enzyme catalyses L-glutamine(in) + L-alanine(out) + Na(+)(out) = L-glutamine(out) + L-alanine(in) + Na(+)(in). It carries out the reaction L-valine(out) + L-glutamine(in) + Na(+)(out) = L-valine(in) + L-glutamine(out) + Na(+)(in). The catalysed reaction is L-glutamine(in) + L-methionine(out) + Na(+)(out) = L-glutamine(out) + L-methionine(in) + Na(+)(in). It catalyses the reaction L-glutamine(in) + L-glutamate(out) + Na(+)(out) + H(+)(out) = L-glutamine(out) + L-glutamate(in) + Na(+)(in) + H(+)(in). The enzyme catalyses D-serine(in) + L-glutamine(out) + Na(+)(out) = D-serine(out) + L-glutamine(in) + Na(+)(in). It carries out the reaction D-serine(in) + L-alanine(out) + Na(+)(out) = D-serine(out) + L-alanine(in) + Na(+)(in). The catalysed reaction is nitrate(in) = nitrate(out). It catalyses the reaction iodide(out) = iodide(in). The enzyme catalyses thiocyanate(in) = thiocyanate(out). Sodium-coupled antiporter of neutral amino acids. In a tri-substrate transport cycle, exchanges neutral amino acids between the extracellular and intracellular compartments, coupled to the inward cotransport of at least one sodium ion. The preferred substrate is the essential amino acid L-glutamine, a precursor for biosynthesis of proteins, nucleotides and amine sugars as well as an alternative fuel for mitochondrial oxidative phosphorylation. Exchanges L-glutamine with other neutral amino acids such as L-serine, L-threonine and L-asparagine in a bidirectional way. Provides L-glutamine to proliferating stem and activated cells driving the metabolic switch toward cell differentiation. The transport cycle is usually pH-independent, with the exception of L-glutamate. Transports extracellular L-glutamate coupled to the cotransport of one proton and one sodium ion in exchange for intracellular L-glutamine counter-ion. May provide for L-glutamate uptake in glial cells regulating glutamine/glutamate cycle in the nervous system. Can transport D-amino acids. Mediates D-serine release from the retinal glia potentially affecting NMDA receptor function in retinal neurons. Displays sodium- and amino acid-dependent but uncoupled channel-like anion conductance with a preference SCN(-) &gt;&gt; NO3(-) &gt; I(-) &gt; Cl(-). Through binding of the fusogenic protein syncytin-1/ERVW-1 may mediate trophoblasts syncytialization, the spontaneous fusion of their plasma membranes, an essential process in placental development. This chain is Neutral amino acid transporter B(0) (SLC1A5), found in Bos taurus (Bovine).